A 534-amino-acid polypeptide reads, in one-letter code: MLVLFETSVGYAIFKVLNEKKLQEVDSLWKEFETPEKANKIVKLKHFEKFQDTAEALAAFTALMEGKINKQLKKVLKKIVKEAHEPLAVADAKLGGVIKEKLNLSCIHSPVVNELMRGIRSQMDGLIPGVEPREMAAMCLGLAHSLSRYRLKFSADKVDTMIVQAISLLDDLDKELNNYIMRCREWYGWHFPELGKIISDNLTYCKCLQKVGDRKNYASATLSEFLSEEVEAEVKAAAEISMGTEVSEEDICNILHLCTQVIEISEYRTQLYEYLQNRMMAIAPNVTVMVGELVGARLIAHAGSLLNLAKHAASTVQILGAEKALFRALKSRRDTPKYGLIYHASLVGQTSPKHKGKISRMLAAKTVLAIRYDAFGEDSSSAMGAENRAKLEARLRILEDRGIRKISGTGKALAKAEKYEHKSEVKTYDPSGDSTLPTCSKKRKIEEVDKEDEITEKKAKKAKIKIKAEVEEEMEEAEEEQVVEEEPTVKKKKKKDKKKHIKEEPLSEEEPCTSTAVPSPEKKKKKKKKKDAED.

Threonine 34 bears the Phosphothreonine mark. A Phosphoserine modification is found at serine 109. Lysine 157 is covalently cross-linked (Glycyl lysine isopeptide (Lys-Gly) (interchain with G-Cter in SUMO2)). Residues 282–400 (IAPNVTVMVG…LEARLRILED (119 aa)) form the Nop domain. 2 positions are modified to phosphoserine: serine 304 and serine 351. Residues lysine 353, lysine 411, lysine 415, lysine 422, lysine 426, lysine 441, lysine 444, and lysine 465 each participate in a glycyl lysine isopeptide (Lys-Gly) (interchain with G-Cter in SUMO2) cross-link. A Glycyl lysine isopeptide (Lys-Gly) (interchain with G-Cter in SUMO); alternate cross-link involves residue lysine 467. A Glycyl lysine isopeptide (Lys-Gly) (interchain with G-Cter in SUMO1); alternate cross-link involves residue lysine 467. Lysine 467 is covalently cross-linked (Glycyl lysine isopeptide (Lys-Gly) (interchain with G-Cter in SUMO2); alternate). A compositionally biased stretch (acidic residues) spans 470 to 486 (VEEEMEEAEEEQVVEEE). The interval 470–534 (VEEEMEEAEE…KKKKKKDAED (65 aa)) is disordered. Lysine 490 is covalently cross-linked (Glycyl lysine isopeptide (Lys-Gly) (interchain with G-Cter in SUMO2)). Over residues 490 to 500 (KKKKKKDKKKH) the composition is skewed to basic residues. Lysine 502 is covalently cross-linked (Glycyl lysine isopeptide (Lys-Gly) (interchain with G-Cter in SUMO); alternate). Residue lysine 502 forms a Glycyl lysine isopeptide (Lys-Gly) (interchain with G-Cter in SUMO2); alternate linkage. Phosphoserine occurs at positions 507 and 519. Over residues 522–534 (KKKKKKKKKDAED) the composition is skewed to basic residues.

The protein belongs to the NOP5/NOP56 family. As to quaternary structure, core component of box C/D small nucleolar ribonucleoprotein (snoRNP) particles; the core proteins SNU13, NOP56, NOP58 and FBL or FBLL1 assemble stepwise onto the snoRNA. Interacts with NOLC1/Nopp140. Interacts with NOPCHAP1, NUFIP1, RUVBL1 and RUVBL2; NOPCHAP1 bridges the association of NOP58 with RUVBL1:RUVBL2 and NUFIP1. Interacts with PIH1D1. Part of the small subunit (SSU) processome, composed of more than 70 proteins and the RNA chaperone small nucleolar RNA (snoRNA) U3. In terms of processing, sumoylation is essential for high-affinity binding to snoRNAs.

Its subcellular location is the nucleus. The protein resides in the nucleolus. The protein localises to the nucleoplasm. Required for the biogenesis of box C/D snoRNAs such as U3, U8 and U14 snoRNAs. Part of the small subunit (SSU) processome, first precursor of the small eukaryotic ribosomal subunit. During the assembly of the SSU processome in the nucleolus, many ribosome biogenesis factors, an RNA chaperone and ribosomal proteins associate with the nascent pre-rRNA and work in concert to generate RNA folding, modifications, rearrangements and cleavage as well as targeted degradation of pre-ribosomal RNA by the RNA exosome. Core component of box C/D small nucleolar ribonucleoprotein (snoRNP) complexes that function in methylation of multiple sites on ribosomal RNAs (rRNAs) and messenger RNAs (mRNAs). This Rattus norvegicus (Rat) protein is Nucleolar protein 58 (Nop58).